A 71-amino-acid chain; its full sequence is Translation initiation factor IF-1 (71 aa).

Residues 1–71 (MSKDDLIQFT…LTKGRVIHRH (71 aa)) enclose the S1-like domain.

The protein belongs to the IF-1 family. In terms of assembly, component of the 30S ribosomal translation pre-initiation complex which assembles on the 30S ribosome in the order IF-2 and IF-3, IF-1 and N-formylmethionyl-tRNA(fMet); mRNA recruitment can occur at any time during PIC assembly.

It is found in the cytoplasm. In terms of biological role, one of the essential components for the initiation of protein synthesis. Stabilizes the binding of IF-2 and IF-3 on the 30S subunit to which N-formylmethionyl-tRNA(fMet) subsequently binds. Helps modulate mRNA selection, yielding the 30S pre-initiation complex (PIC). Upon addition of the 50S ribosomal subunit IF-1, IF-2 and IF-3 are released leaving the mature 70S translation initiation complex. This chain is Translation initiation factor IF-1, found in Rickettsia conorii (strain ATCC VR-613 / Malish 7).